The sequence spans 316 residues: Protein FLUORESCENT IN BLUE LIGHT, chloroplastic (316 aa).

The transit peptide at 1–26 (MAALIRCCSSFSHTSGGQPPPRDKSR) directs the protein to the chloroplast. Residues 125–145 (MFSMPILLLVALIGATVGGLL) traverse the membrane as a helical segment. The stretch at 144 to 175 (LLARQRKGELQRLNEQLRQINAALRRQAKIES) forms a coiled coil. TPR repeat units lie at residues 203-236 (LISK…AQSL), 243-276 (KKAA…SKRE), and 283-316 (TEAY…LETD).

As to quaternary structure, part of the FLU-containing chloroplast membrane complex composed of FLU, CRD1, PORB, PORC, CHLP and HEMA1. Interacts with HEMA1 (via C-terminus) only in the absence of light. No interaction with HEMA2.

The protein resides in the plastid. Its subcellular location is the chloroplast membrane. It is found in the chloroplast thylakoid membrane. Negative regulator of tetrapyrrole biosynthesis (including chlorophyll) in chloroplasts, probably via HEMA1 repression. Inhibits especially the magnesium ion Mg(2+) branch of tetrapyrrole biosynthesis, but independently of heme. This Arabidopsis thaliana (Mouse-ear cress) protein is Protein FLUORESCENT IN BLUE LIGHT, chloroplastic (FLU).